Consider the following 315-residue polypeptide: Methionyl-tRNA formyltransferase (315 aa).

The interval 2-189 (SESLRIIFAG…LITTLKQLAD (188 aa)) is N-terminal domain. A (6S)-5,6,7,8-tetrahydrofolate-binding site is contributed by 113 to 116 (SLLP). A C-terminal domain region spans residues 210–315 (KEEARIDWSL…EWFVPGNRLA (106 aa)).

It belongs to the Fmt family.

It carries out the reaction L-methionyl-tRNA(fMet) + (6R)-10-formyltetrahydrofolate = N-formyl-L-methionyl-tRNA(fMet) + (6S)-5,6,7,8-tetrahydrofolate + H(+). Functionally, attaches a formyl group to the free amino group of methionyl-tRNA(fMet). The formyl group appears to play a dual role in the initiator identity of N-formylmethionyl-tRNA by promoting its recognition by IF2 and preventing the misappropriation of this tRNA by the elongation apparatus. In Escherichia coli O6:H1 (strain CFT073 / ATCC 700928 / UPEC), this protein is Methionyl-tRNA formyltransferase.